The following is a 247-amino-acid chain: Protein-L-isoaspartate O-methyltransferase 2 (247 aa).

Residue Ser97 is part of the active site.

The protein belongs to the methyltransferase superfamily. L-isoaspartyl/D-aspartyl protein methyltransferase family.

It localises to the cytoplasm. It carries out the reaction [protein]-L-isoaspartate + S-adenosyl-L-methionine = [protein]-L-isoaspartate alpha-methyl ester + S-adenosyl-L-homocysteine. Catalyzes the methyl esterification of L-isoaspartyl residues in peptides and proteins that result from spontaneous decomposition of normal L-aspartyl and L-asparaginyl residues. It plays a role in the repair and/or degradation of damaged proteins. This is Protein-L-isoaspartate O-methyltransferase 2 from Syntrophobacter fumaroxidans (strain DSM 10017 / MPOB).